The sequence spans 774 residues: C6 finger domain transcription factor nscR (774 aa).

The segment at residues 17-43 (CELCRERKIKCDKVDPCNNCVSAGVVC) is a DNA-binding region (zn(2)-C6 fungal-type). Disordered stretches follow at residues 61 to 94 (RPMS…SGAV), 536 to 559 (LQLP…PQEH), and 665 to 697 (PTFS…SDLS). Over residues 67-78 (FVPPRAPTPVAG) the composition is skewed to pro residues. A compositionally biased stretch (low complexity) spans 536–548 (LQLPQPSNGSSQP). Residues 665 to 674 (PTFSLGSSTG) are compositionally biased toward polar residues. The segment covering 675 to 697 (TSAAPTPRSRASSTPSDTLSDLS) has biased composition (low complexity).

The protein localises to the nucleus. Functionally, transcription factor that specifically regulates the neosartoricin biosynthesis gene cluster. In Aspergillus fumigatus (strain ATCC MYA-4609 / CBS 101355 / FGSC A1100 / Af293) (Neosartorya fumigata), this protein is C6 finger domain transcription factor nscR.